The chain runs to 235 residues: MKIMIACGLVAAALFTLTSGQSLAADAPFEGRKKCSSCHKAQAQSWKDTAHAKAMESLKPNVKKEAKQKAKLDPAKDYTQDKDCVGCHVDGFGQKGGYTIESPKPMLTGVGCESCHGPGRNFRGDHRKSGQAFEKSGKKTPRKDLAKKGQDFHFEERCSACHLNYEGSPWKGAKAPYTPFTPEVDAKYTFKFDEMVKEVKAMHEHYKLEGVFEGEPKFKFHDEFQASAKPAKKGK.

Positions 1–24 (MKIMIACGLVAAALFTLTSGQSLA) are cleaved as a signal peptide. 15 residues coordinate heme: Cys-35, Cys-38, His-39, His-51, Cys-84, Cys-87, His-88, Cys-112, Cys-115, His-116, His-126, Cys-158, Cys-161, His-162, and His-203. Residues 121–144 (NFRGDHRKSGQAFEKSGKKTPRKD) form a disordered region.

In terms of processing, binds 4 heme groups per subunit.

The protein localises to the periplasm. Involved in ammonia oxidation; accepts electrons directly from hydroxylamine oxidoreductase (HAO). The chain is Cytochrome c-554 (cycA1) from Nitrosomonas europaea (strain ATCC 19718 / CIP 103999 / KCTC 2705 / NBRC 14298).